The chain runs to 499 residues: Putative DUF21 domain-containing protein At1g03270 (499 aa).

Over 1-32 the chain is Extracellular; the sequence is MVVLSTLALVRAAYSLNSFVFEAEDIRFGSPW. The 183-residue stretch at 29-211 folds into the CNNM transmembrane domain; the sequence is GSPWWFVVVG…GKGGELTHEE (183 aa). A helical membrane pass occupies residues 33–53; the sequence is WFVVVGVACFLVLFAGIMSGL. At 54-91 the chain is on the cytoplasmic side; sequence TLGLMSLGLVELEILQQSGSSAEKKQAAAILPVVKKQH. Residues 92–112 traverse the membrane as a helical segment; sequence QLLVTLLLCNAAAMEALPICL. Residues 113–114 lie on the Extracellular side of the membrane; sequence DK. The chain crosses the membrane as a helical span at residues 115-135; sequence IFHPFVAVLLSVTFVLAFGEI. Over 136–145 the chain is Cytoplasmic; the sequence is IPQAICSRYG. The helical transmembrane segment at 146–166 threads the bilayer; the sequence is LAVGANFLWLVRILMIICYPI. Over 167–499 the chain is Extracellular; that stretch reads AYPIGKVLDA…TEPLLAESDR (333 aa). Asn-181 is a glycosylation site (N-linked (GlcNAc...) asparagine). CBS domains follow at residues 230-291, 295-359, and 365-431; these read MTPI…EAPV, SIRK…SNLT, and HESH…IVDE. 3 N-linked (GlcNAc...) asparagine glycosylation sites follow: Asn-357, Asn-391, and Asn-484.

The protein localises to the membrane. The chain is Putative DUF21 domain-containing protein At1g03270 (CBSDUF4) from Arabidopsis thaliana (Mouse-ear cress).